Reading from the N-terminus, the 292-residue chain is Carbapenem-hydrolyzing beta-lactamase transcriptional activator (292 aa).

Positions 5–62 constitute an HTH lysR-type domain; the sequence is IPLNALRAFEASARYLNFTKAGLELHVSQAAVSQHVRTLEAILGVNLFKRLPRGLQLT. Residues 22–41 constitute a DNA-binding region (H-T-H motif); that stretch reads FTKAGLELHVSQAAVSQHVR.

This sequence belongs to the LysR transcriptional regulatory family.

Its function is as follows. This protein is a positive regulator of gene expression of carbapenem-hydrolyzing beta-lactamase (smeA). Seems to also be a repressor of its own transcription. The sequence is that of Carbapenem-hydrolyzing beta-lactamase transcriptional activator (smeR) from Serratia marcescens.